The following is a 486-amino-acid chain: Non-structural protein 1 (486 aa).

An RNA-binding region spans residues M1–L81. The zinc-binding domain stretch occupies residues C42–H79. The important for cytoskeleton localization stretch occupies residues R82–N176. The segment at E317–E486 is interaction with host IRF3. Residues D479–S483 carry the IKBKB-like degron (ILD) motif motif. The pLxIS motif motif lies at S480 to S483.

It belongs to the rotavirus NSP1 family. As to quaternary structure, interacts (via C-terminus) with host IRF3; this interaction leads to IRF3 degradation. Interacts with host IRF7; this interaction leads to IRF7 degradation. Interacts with host CUL1 and CUL3. Interacts with host BTRC. The C-terminal region is phosphorylated by host CKII/CSNK2A1. Phosphorylation of the DSGXS motif is essential for host NF-kappa-B inhibition.

It localises to the host cytoplasm. It is found in the host cytoskeleton. Plays a role in the inhibition of host innate immunity by inducing the degradation of key host factors required to activate interferon production such as IRF3, IRF5 or IRF7. Associates with components of cullin RING ligases (CRLs) including CUL1 or CUL3, which are essential multisubunit ubiquitination complexes, to modulate their activities. Recognizes the host NF-kappa-B regulator BTRC through the presence of a DSGXS motif in the C-terminal substrate recognition domain. The polypeptide is Non-structural protein 1 (Rotavirus A (isolate RVA/Human/India/116E/1986/G9P8[11]) (RV-A)).